A 168-amino-acid polypeptide reads, in one-letter code: MSLMDNLLGILRVRVQRGVNLAVRDVSSSDPYVVLKLGRQKLKTKVVKQNVNPQWQEDLSFTVTDPNLPLTLIVYDHDFFSKDDKMGDAEIDLKPYIEALRMELSGLPDGTIISTIGPSRGNCLAEESYIRWINDRIVQHICLRLRNVERGEVEIELQWIDLPGSKGL.

The region spanning 1-106 is the C2 domain; that stretch reads MSLMDNLLGI…IEALRMELSG (106 aa). Ca(2+)-binding residues include R24, D25, D30, D76, H77, D78, and D84.

This sequence belongs to the plant CAR protein family. In terms of assembly, binds to PYR/PYL/RCAR abscisic acid intracellular receptors in an ABA-independent manner, both at the plasma membrane and in the nucleus. Ca(2+) serves as cofactor.

Its subcellular location is the cell membrane. The protein localises to the nucleus. Stimulates the GTPase/ATPase activities of Obg-like ATPases. Mediates the transient calcium-dependent interaction of PYR/PYL/RCAR abscisic acid (ABA) receptors with the plasma membrane and thus regulates ABA sensitivity. This is Protein C2-DOMAIN ABA-RELATED 3 from Arabidopsis thaliana (Mouse-ear cress).